A 162-amino-acid polypeptide reads, in one-letter code: uncharacterized protein (162 aa).

Pentapeptide repeat domains are found at residues 33 to 72 (ASLI…NMTE), 73 to 112 (VCLI…DLRK), and 113 to 152 (ANLS…YISD).

This is an uncharacterized protein from Synechocystis sp. (strain ATCC 27184 / PCC 6803 / Kazusa).